The primary structure comprises 82 residues: ATP synthase subunit c (82 aa).

Transmembrane regions (helical) follow at residues 7–27 (FVAL…CIGI) and 53–73 (FLLA…AMMF).

This sequence belongs to the ATPase C chain family. In terms of assembly, F-type ATPases have 2 components, F(1) - the catalytic core - and F(0) - the membrane proton channel. F(1) has five subunits: alpha(3), beta(3), gamma(1), delta(1), epsilon(1). F(0) has three main subunits: a(1), b(2) and c(10-14). The alpha and beta chains form an alternating ring which encloses part of the gamma chain. F(1) is attached to F(0) by a central stalk formed by the gamma and epsilon chains, while a peripheral stalk is formed by the delta and b chains.

The protein resides in the cell inner membrane. F(1)F(0) ATP synthase produces ATP from ADP in the presence of a proton or sodium gradient. F-type ATPases consist of two structural domains, F(1) containing the extramembraneous catalytic core and F(0) containing the membrane proton channel, linked together by a central stalk and a peripheral stalk. During catalysis, ATP synthesis in the catalytic domain of F(1) is coupled via a rotary mechanism of the central stalk subunits to proton translocation. Functionally, key component of the F(0) channel; it plays a direct role in translocation across the membrane. A homomeric c-ring of between 10-14 subunits forms the central stalk rotor element with the F(1) delta and epsilon subunits. The protein is ATP synthase subunit c of Polaromonas sp. (strain JS666 / ATCC BAA-500).